Reading from the N-terminus, the 372-residue chain is MPARPIPVPAFALALALAAALAVPAPAAAARVKELADVVGVRENALYGYGLVVGLAGTGDSERVLFTQQSVAGMLGRLGIRIDPKDVRARNVAAVMVTARLPPFARPGTRIDVAVASMGNARSLAGGLLLVTPLAGGDGKVYAVGQGPVQVAGYDAGAGGAELRKNTPTSGRVAGGAAVERAVDFALGQAPLVLALRRPDLTTASRLAAAVNAKLGAGTARAVDPAAVELSPPPARKDDVVGFLAEIELLEVEADQRARVVVSERTGTVVAGEGVRLRPVAVAHGGLQVRVQRDPAVSQPAPFGAGRTVEATRDRAAATEAGGGVVALPATASVQDLARALDLLGASPRDLVAVLEAIRAAGALDAELEVLE.

Residues 1–29 (MPARPIPVPAFALALALAAALAVPAPAAA) form the signal peptide.

Belongs to the FlgI family. The basal body constitutes a major portion of the flagellar organelle and consists of four rings (L,P,S, and M) mounted on a central rod.

It localises to the periplasm. Its subcellular location is the bacterial flagellum basal body. In terms of biological role, assembles around the rod to form the L-ring and probably protects the motor/basal body from shearing forces during rotation. The sequence is that of Flagellar P-ring protein from Anaeromyxobacter dehalogenans (strain 2CP-1 / ATCC BAA-258).